The sequence spans 351 residues: Large ribosomal subunit protein uL3 (351 aa).

Disordered regions lie at residues 1–31 (MGHR…TPRT) and 246–271 (KGSR…GQLG).

Belongs to the universal ribosomal protein uL3 family. In terms of assembly, part of the 50S ribosomal subunit. Forms a cluster with proteins L14 and L24e.

Its function is as follows. One of the primary rRNA binding proteins, it binds directly near the 3'-end of the 23S rRNA, where it nucleates assembly of the 50S subunit. The chain is Large ribosomal subunit protein uL3 from Saccharolobus solfataricus (strain ATCC 35092 / DSM 1617 / JCM 11322 / P2) (Sulfolobus solfataricus).